The chain runs to 430 residues: Glutamate-1-semialdehyde 2,1-aminomutase (430 aa).

K265 carries the post-translational modification N6-(pyridoxal phosphate)lysine.

This sequence belongs to the class-III pyridoxal-phosphate-dependent aminotransferase family. HemL subfamily. As to quaternary structure, homodimer. Requires pyridoxal 5'-phosphate as cofactor.

It localises to the cytoplasm. The enzyme catalyses (S)-4-amino-5-oxopentanoate = 5-aminolevulinate. The protein operates within porphyrin-containing compound metabolism; protoporphyrin-IX biosynthesis; 5-aminolevulinate from L-glutamyl-tRNA(Glu): step 2/2. The sequence is that of Glutamate-1-semialdehyde 2,1-aminomutase from Shewanella baltica (strain OS155 / ATCC BAA-1091).